We begin with the raw amino-acid sequence, 190 residues long: dTTP/UTP pyrophosphatase (190 aa).

Catalysis depends on aspartate 71, which acts as the Proton acceptor.

This sequence belongs to the Maf family. YhdE subfamily. The cofactor is a divalent metal cation.

The protein localises to the cytoplasm. The catalysed reaction is dTTP + H2O = dTMP + diphosphate + H(+). It carries out the reaction UTP + H2O = UMP + diphosphate + H(+). In terms of biological role, nucleoside triphosphate pyrophosphatase that hydrolyzes dTTP and UTP. May have a dual role in cell division arrest and in preventing the incorporation of modified nucleotides into cellular nucleic acids. This Xanthomonas oryzae pv. oryzae (strain MAFF 311018) protein is dTTP/UTP pyrophosphatase.